We begin with the raw amino-acid sequence, 477 residues long: Acylamidase (477 aa).

Active-site charge relay system residues include Lys-82 and Ser-157. The Acyl-ester intermediate role is filled by Ser-181.

It belongs to the amidase family.

The catalysed reaction is a monocarboxylic acid amide + H2O = a monocarboxylate + NH4(+). It catalyses the reaction an anilide + H2O = aniline + a carboxylate + H(+). The enzyme catalyses an N-acyl-L-amino acid + H2O = an L-alpha-amino acid + a carboxylate. It carries out the reaction an N-acetyl-L-cysteine-S-conjugate + H2O = an S-substituted L-cysteine + acetate. Amidase activity is completely suppressed by inhibitors of serine proteases (phenylmethylsulfonyl fluoride and diisopropyl fluorophosphate), partially inhibited by copper and mercury ions, but is not affected by inhibitors of aliphatic amidases (acetaldehyde and nitrophenyl disulfides) or by EDTA. Amidase with broad substrate specificity, catalyzing the hydrolysis of a wide range of N-substituted amides, and, to a lesser extent, the hydrolysis of non-substituted amides. Acid para-nitroanilides (4'-nitroacetanilide, Gly-pNA, Ala-pNA, Leu-pNA) are the best substrates for this enzyme. N-substituted acrylamides (isopropyl acrylamide, N,N-dimethyl-aminopropyl acrylamide, and methylene-bis-acrylamide), N-acetyl derivatives of glycine, alanine and leucine, and aliphatic amides (acetamide, acrylamide, isobutyramide, n-butyramide, and valeramide) can also be used as substrates but with less efficiency. This chain is Acylamidase, found in Rhodococcus erythropolis (Arthrobacter picolinophilus).